Here is a 305-residue protein sequence, read N- to C-terminus: Ornithine carbamoyltransferase (305 aa).

Carbamoyl phosphate is bound by residues Ser50–Thr53, Gln77, Arg101, and His128–Gln131. L-ornithine contacts are provided by residues Asn162, Asp220, and Ser224–Met225. Residues Cys260–Leu261 and Arg288 contribute to the carbamoyl phosphate site.

This sequence belongs to the aspartate/ornithine carbamoyltransferase superfamily. OTCase family.

The protein localises to the cytoplasm. The enzyme catalyses carbamoyl phosphate + L-ornithine = L-citrulline + phosphate + H(+). It participates in amino-acid degradation; L-arginine degradation via ADI pathway; carbamoyl phosphate from L-arginine: step 2/2. Its function is as follows. Reversibly catalyzes the transfer of the carbamoyl group from carbamoyl phosphate (CP) to the N(epsilon) atom of ornithine (ORN) to produce L-citrulline. In Akkermansia muciniphila (strain ATCC BAA-835 / DSM 22959 / JCM 33894 / BCRC 81048 / CCUG 64013 / CIP 107961 / Muc), this protein is Ornithine carbamoyltransferase.